The following is a 390-amino-acid chain: DNA polymerase IV (390 aa).

The 182-residue stretch at 6–187 (VMHVDLDAFF…LDIAVMPGIG (182 aa)) folds into the UmuC domain. The Mg(2+) site is built by Asp10 and Asp105. Glu106 is a catalytic residue.

It belongs to the DNA polymerase type-Y family. In terms of assembly, monomer. It depends on Mg(2+) as a cofactor.

It localises to the cytoplasm. It carries out the reaction DNA(n) + a 2'-deoxyribonucleoside 5'-triphosphate = DNA(n+1) + diphosphate. Poorly processive, error-prone DNA polymerase involved in untargeted mutagenesis. Copies undamaged DNA at stalled replication forks, which arise in vivo from mismatched or misaligned primer ends. These misaligned primers can be extended by PolIV. Exhibits no 3'-5' exonuclease (proofreading) activity. May be involved in translesional synthesis, in conjunction with the beta clamp from PolIII. This Dehalococcoides mccartyi (strain ATCC BAA-2100 / JCM 16839 / KCTC 5957 / BAV1) protein is DNA polymerase IV.